A 348-amino-acid chain; its full sequence is MSGWSHRHILDLASFSLEDYSSVLELAHRFRSMPVTGARKLPALQGRLVATLFFEPSTRTRSSFELAARRLSADVQSFTPASSSLSKGETVLDTARTYVAMGADVLVVRHSSTSVPEQLACALDRSGERTAVLNGGDGLHSHPSQGLLDLYTLAHYFDSQNPLPEALQGKRIVIVGDVLHSRVARSNLWALTACGADVVLCGPPSLVPQDFVAFVEAPPPGQSHDPVQHRGCVEVVRTLEEALPGADAVMTLRLQKERMHQHLLTDLNRFHRDYGLTHERLKLCGKPVPLLHPGPVNRGVELGGSLLDDHSISLVEEQVRNGIPIRMALLYLMAAVESSSDPSLAAIG.

The carbamoyl phosphate site is built by R59 and T60. K87 contacts L-aspartate. Carbamoyl phosphate-binding residues include R109, H142, and Q145. Positions 182 and 253 each coordinate L-aspartate. Carbamoyl phosphate-binding residues include G294 and P295.

This sequence belongs to the aspartate/ornithine carbamoyltransferase superfamily. ATCase family. As to quaternary structure, heterododecamer (2C3:3R2) of six catalytic PyrB chains organized as two trimers (C3), and six regulatory PyrI chains organized as three dimers (R2).

The enzyme catalyses carbamoyl phosphate + L-aspartate = N-carbamoyl-L-aspartate + phosphate + H(+). The protein operates within pyrimidine metabolism; UMP biosynthesis via de novo pathway; (S)-dihydroorotate from bicarbonate: step 2/3. Functionally, catalyzes the condensation of carbamoyl phosphate and aspartate to form carbamoyl aspartate and inorganic phosphate, the committed step in the de novo pyrimidine nucleotide biosynthesis pathway. The sequence is that of Aspartate carbamoyltransferase catalytic subunit from Prochlorococcus marinus (strain MIT 9303).